The chain runs to 341 residues: Malate dehydrogenase, mitochondrial (341 aa).

NAD(+) is bound by residues G35 to G41 and D61. Positions 108 and 114 each coordinate substrate. NAD(+)-binding positions include N121 and I144–N146. N146 and R180 together coordinate substrate. H204 acts as the Proton acceptor in catalysis. M255 provides a ligand contact to NAD(+).

Belongs to the LDH/MDH superfamily. MDH type 1 family. As to quaternary structure, homodimer.

The protein resides in the mitochondrion matrix. It carries out the reaction (S)-malate + NAD(+) = oxaloacetate + NADH + H(+). In terms of biological role, catalyzes the reversible conversion of (S)-malate to oxaloacetate in the citric acid cycle. This is Malate dehydrogenase, mitochondrial from Caenorhabditis elegans.